Consider the following 357-residue polypeptide: Dihydroflavonol 4-reductase (357 aa).

Residues K49 and Y168 each contribute to the NADP(+) site.

It belongs to the NAD(P)-dependent epimerase/dehydratase family. Dihydroflavonol-4-reductase subfamily.

The enzyme catalyses a (2R,3S,4S)-leucoanthocyanidin + NADP(+) = a (2R,3R)-dihydroflavonol + NADPH + H(+). The catalysed reaction is (2S)-flavan-4-ol + NADP(+) = (2S)-flavanone + NADPH + H(+). It functions in the pathway pigment biosynthesis; anthocyanin biosynthesis. In terms of biological role, bifunctional enzyme involved in flavonoid metabolism. The chain is Dihydroflavonol 4-reductase (A1) from Zea mays (Maize).